The following is an 89-amino-acid chain: Small ribosomal subunit protein uS15 (89 aa).

It belongs to the universal ribosomal protein uS15 family. Part of the 30S ribosomal subunit. Forms a bridge to the 50S subunit in the 70S ribosome, contacting the 23S rRNA.

Functionally, one of the primary rRNA binding proteins, it binds directly to 16S rRNA where it helps nucleate assembly of the platform of the 30S subunit by binding and bridging several RNA helices of the 16S rRNA. In terms of biological role, forms an intersubunit bridge (bridge B4) with the 23S rRNA of the 50S subunit in the ribosome. This is Small ribosomal subunit protein uS15 from Nitratidesulfovibrio vulgaris (strain DSM 19637 / Miyazaki F) (Desulfovibrio vulgaris).